A 92-amino-acid polypeptide reads, in one-letter code: Small ribosomal subunit protein uS19 (92 aa).

This sequence belongs to the universal ribosomal protein uS19 family.

In terms of biological role, protein S19 forms a complex with S13 that binds strongly to the 16S ribosomal RNA. This Methylobacterium sp. (strain 4-46) protein is Small ribosomal subunit protein uS19.